The following is a 931-amino-acid chain: MDMFPLTWVFLALYFSGHEVRSQQDPPCGGRLNSKDAGYITSPGYPQDYPSHQNCEWIVYAPEPNQKIVLNFNPHFEIEKHDCKYDFIEIRDGDSESADLLGKHCGNIAPPTIISSGSVLYIKFTSDYARQGAGFSLRYEIFKTGSEDCSKNFTSPNGTIESPGFPEKYPHNLDCTFTILAKPRMEIILQFLTFDLEHDPLQVGEGDCKYDWLDIWDGIPHVGPLIGKYCGTKTPSKLRSSTGILSLTFHTDMAVAKDGFSARYYLIHQEPPENFQCNVPLGMESGRIANEQISASSTFSDGRWTPQQSRLHGDDNGWTPNLDSNKEYLQVDLRFLTMLTAIATQGAISRETQKGYYVKSYKLEVSTNGEDWMVYRHGKNHKIFQANNDATEVVLNKLHMPLLTRFIRIRPQTWHLGIALRLELFGCRVTDAPCSNMLGMLSGLIADTQISASSTREYLWSPSAARLVSSRSGWFPRNPQAQPGEEWLQVDLGTPKTVKGVIIQGARGGDSITAVEARAFVRKFKVSYSLNGKDWEYIQDPRTQQTKLFEGNMHYDTPDIRRFDPVPAQYVRVYPERWSPAGIGMRLEVLGCDWTDSKPTVETLGPTVKSEETTTPYPMDEDATECGENCSFEDDKDLQLPSGFNCNFDFPEETCGWVYDHAKWLRSTWISSANPNDRTFPDDKNFLKLQSDGRREGQYGRLISPPVHLPRSPVCMEFQYQAMGGHGVALQVVREASQESKLLWVIREDQGSEWKHGRIILPSYDMEYQIVFEGVIGKGRSGEISIDDIRISTDVPLENCMEPISAFAGEDFKVDIPETHGGEGYEDEIDDEYEGDWSNSSSSTSGAGDPSSGKEKSWLYTLDPILITIIAMSSLGVLLGATCAGLLLYCTCSYSGLSSRSCTTLENYNFELYDGLKHKVKINHQKCCSEA.

The N-terminal stretch at 1–20 (MDMFPLTWVFLALYFSGHEV) is a signal peptide. Residues 21–864 (RSQQDPPCGG…EKSWLYTLDP (844 aa)) are Extracellular-facing. 3 disulfides stabilise this stretch: Cys28/Cys55, Cys83/Cys105, and Cys149/Cys175. CUB domains are found at residues 28–142 (CGGR…YEIF) and 149–267 (CSKN…YYLI). N-linked (GlcNAc...) asparagine glycosylation is found at Asn152 and Asn157. The Ca(2+) site is built by Glu197, Asp211, and Asp252. A disulfide bridge links Cys208 with Cys230. Cystine bridges form between Cys277–Cys427 and Cys434–Cys592. 2 F5/8 type C domains span residues 277-427 (CNVP…LFGC) and 434-592 (CSNM…VLGC). The span at 298 to 310 (TFSDGRWTPQQSR) shows a compositional bias: polar residues. The interval 298–317 (TFSDGRWTPQQSRLHGDDNG) is disordered. Residues 601–621 (VETLGPTVKSEETTTPYPMDE) form a disordered region. Residue Asn629 is glycosylated (N-linked (GlcNAc...) asparagine). The 161-residue stretch at 642–802 (SGFNCNFDFP…TDVPLENCME (161 aa)) folds into the MAM domain. The disordered stretch occupies residues 819-854 (THGGEGYEDEIDDEYEGDWSNSSSSTSGAGDPSSGK). Acidic residues predominate over residues 824–835 (GYEDEIDDEYEG). Positions 836 to 851 (DWSNSSSSTSGAGDPS) are enriched in low complexity. N-linked (GlcNAc...) asparagine glycosylation occurs at Asn839. The helical transmembrane segment at 865–889 (ILITIIAMSSLGVLLGATCAGLLLY) threads the bilayer. Over 890 to 931 (CTCSYSGLSSRSCTTLENYNFELYDGLKHKVKINHQKCCSEA) the chain is Cytoplasmic.

It belongs to the neuropilin family. As to quaternary structure, heterodimer with NRP1. Binds PLXNB1. As to expression, expressed in developing CNS, PNS and in some nonneural tissues including limb buds, developing bones, muscles, intestinal epithelium, kidney, lung and submandibular gland.

The protein resides in the membrane. In terms of biological role, high affinity receptor for semaphorins 3C, 3F, VEGF-165 and VEGF-145 isoforms of VEGF, and the PLGF-2 isoform of PGF. The chain is Neuropilin-2 (Nrp2) from Mus musculus (Mouse).